A 30-amino-acid chain; its full sequence is Snake venom serine protease (30 aa).

A Peptidase S1 domain is found at 1 to 30 (VIGGDECNINEHRFLVALYDPDGFLSGGIL).

It belongs to the peptidase S1 family. Snake venom subfamily. Monomer. In terms of processing, N-Glycosylated. Expressed by the venom gland.

The protein resides in the secreted. Its activity is regulated as follows. Inhibited by diisopropylfluorophosphate (DFP). Its function is as follows. Snake venom serine protease that catalyzes the hydrolysis of arginine esters, kallikrein substrates Pro-Phe-Arg-MCA and Z-Phe-Arg-MCA. Cleaves kininogen analogs to release bradykinin. Induces contraction of the isolated rat uterus directly at high concentrations, but provokes more forceful contractions when injected in presence of bovine plasma. Shows capillary permeability-increasing activity and hypotensive activity on the anesthetized rat. This Crotalus viridis viridis (Prairie rattlesnake) protein is Snake venom serine protease.